Consider the following 425-residue polypeptide: Serine--tRNA ligase (425 aa).

230 to 232 (TAE) contributes to the L-serine binding site. ATP is bound at residue 261–263 (RSE). L-serine is bound at residue E284. 348–351 (EISS) serves as a coordination point for ATP. S383 serves as a coordination point for L-serine.

Belongs to the class-II aminoacyl-tRNA synthetase family. Type-1 seryl-tRNA synthetase subfamily. Homodimer. The tRNA molecule binds across the dimer.

It localises to the cytoplasm. It carries out the reaction tRNA(Ser) + L-serine + ATP = L-seryl-tRNA(Ser) + AMP + diphosphate + H(+). It catalyses the reaction tRNA(Sec) + L-serine + ATP = L-seryl-tRNA(Sec) + AMP + diphosphate + H(+). It participates in aminoacyl-tRNA biosynthesis; selenocysteinyl-tRNA(Sec) biosynthesis; L-seryl-tRNA(Sec) from L-serine and tRNA(Sec): step 1/1. In terms of biological role, catalyzes the attachment of serine to tRNA(Ser). Is also able to aminoacylate tRNA(Sec) with serine, to form the misacylated tRNA L-seryl-tRNA(Sec), which will be further converted into selenocysteinyl-tRNA(Sec). In Ligilactobacillus salivarius (strain UCC118) (Lactobacillus salivarius), this protein is Serine--tRNA ligase.